Reading from the N-terminus, the 337-residue chain is Holliday junction branch migration complex subunit RuvB (337 aa).

Positions 4 to 184 (ADRLIAPAAI…FGIVQRLEFY (181 aa)) are large ATPase domain (RuvB-L). Residues isoleucine 23, arginine 24, glycine 65, lysine 68, threonine 69, threonine 70, 131–133 (EDY), arginine 174, tyrosine 184, and arginine 221 contribute to the ATP site. Position 69 (threonine 69) interacts with Mg(2+). Residues 185–255 (KVEDLAHIVG…IAAQALDMLD (71 aa)) are small ATPAse domain (RuvB-S). Residues 258–337 (NAGFDYMDRK…FGLTTPERQG (80 aa)) form a head domain (RuvB-H) region. DNA is bound by residues arginine 313 and arginine 318.

Belongs to the RuvB family. As to quaternary structure, homohexamer. Forms an RuvA(8)-RuvB(12)-Holliday junction (HJ) complex. HJ DNA is sandwiched between 2 RuvA tetramers; dsDNA enters through RuvA and exits via RuvB. An RuvB hexamer assembles on each DNA strand where it exits the tetramer. Each RuvB hexamer is contacted by two RuvA subunits (via domain III) on 2 adjacent RuvB subunits; this complex drives branch migration. In the full resolvosome a probable DNA-RuvA(4)-RuvB(12)-RuvC(2) complex forms which resolves the HJ.

It localises to the cytoplasm. It catalyses the reaction ATP + H2O = ADP + phosphate + H(+). Its function is as follows. The RuvA-RuvB-RuvC complex processes Holliday junction (HJ) DNA during genetic recombination and DNA repair, while the RuvA-RuvB complex plays an important role in the rescue of blocked DNA replication forks via replication fork reversal (RFR). RuvA specifically binds to HJ cruciform DNA, conferring on it an open structure. The RuvB hexamer acts as an ATP-dependent pump, pulling dsDNA into and through the RuvAB complex. RuvB forms 2 homohexamers on either side of HJ DNA bound by 1 or 2 RuvA tetramers; 4 subunits per hexamer contact DNA at a time. Coordinated motions by a converter formed by DNA-disengaged RuvB subunits stimulates ATP hydrolysis and nucleotide exchange. Immobilization of the converter enables RuvB to convert the ATP-contained energy into a lever motion, pulling 2 nucleotides of DNA out of the RuvA tetramer per ATP hydrolyzed, thus driving DNA branch migration. The RuvB motors rotate together with the DNA substrate, which together with the progressing nucleotide cycle form the mechanistic basis for DNA recombination by continuous HJ branch migration. Branch migration allows RuvC to scan DNA until it finds its consensus sequence, where it cleaves and resolves cruciform DNA. The chain is Holliday junction branch migration complex subunit RuvB from Tolumonas auensis (strain DSM 9187 / NBRC 110442 / TA 4).